A 236-amino-acid chain; its full sequence is 2-C-methyl-D-erythritol 4-phosphate cytidylyltransferase (236 aa).

It belongs to the IspD/TarI cytidylyltransferase family. IspD subfamily. Homodimer.

It carries out the reaction 2-C-methyl-D-erythritol 4-phosphate + CTP + H(+) = 4-CDP-2-C-methyl-D-erythritol + diphosphate. It functions in the pathway isoprenoid biosynthesis; isopentenyl diphosphate biosynthesis via DXP pathway; isopentenyl diphosphate from 1-deoxy-D-xylulose 5-phosphate: step 2/6. In terms of biological role, catalyzes the formation of 4-diphosphocytidyl-2-C-methyl-D-erythritol from CTP and 2-C-methyl-D-erythritol 4-phosphate (MEP). The chain is 2-C-methyl-D-erythritol 4-phosphate cytidylyltransferase from Salmonella paratyphi A (strain ATCC 9150 / SARB42).